Consider the following 207-residue polypeptide: Large ribosomal subunit protein uL3c (207 aa).

The interval 115–151 (IGKGFAGNQKRHNFSRGPMTHGSKNHRLPGSIGAGST) is disordered.

This sequence belongs to the universal ribosomal protein uL3 family. As to quaternary structure, part of the 50S ribosomal subunit.

It is found in the plastid. It localises to the chloroplast. Functionally, one of the primary rRNA binding proteins, it binds directly near the 3'-end of the 23S rRNA, where it nucleates assembly of the 50S subunit. In Emiliania huxleyi (Coccolithophore), this protein is Large ribosomal subunit protein uL3c (rpl3).